The following is a 292-amino-acid chain: Undecaprenyl-diphosphatase (292 aa).

A run of 7 helical transmembrane segments spans residues 1 to 21 (MSLV…FLPV), 46 to 66 (FVTI…RADI), 90 to 110 (LGWY…LLEH), 114 to 134 (ALGN…LLAA), 192 to 212 (FLLS…STVP), 225 to 245 (VVGT…LLAW), and 253 to 273 (VFVV…LSGV).

This sequence belongs to the UppP family.

The protein localises to the cell inner membrane. The enzyme catalyses di-trans,octa-cis-undecaprenyl diphosphate + H2O = di-trans,octa-cis-undecaprenyl phosphate + phosphate + H(+). Functionally, catalyzes the dephosphorylation of undecaprenyl diphosphate (UPP). Confers resistance to bacitracin. The protein is Undecaprenyl-diphosphatase of Anaeromyxobacter dehalogenans (strain 2CP-1 / ATCC BAA-258).